A 376-amino-acid chain; its full sequence is D-alanine--D-alanine ligase B (376 aa).

The ATP-grasp domain maps to 155–361; the sequence is KRLMRDAGLP…QTDLMDKLIA (207 aa). 184–239 lines the ATP pocket; the sequence is AALGTPDLFVKPANLGSSVGVSRARSEEEFAASCALAFRYDRKILVEQALNGAREI. Residues Asp-316, Glu-328, and Asn-330 each coordinate Mg(2+).

The protein belongs to the D-alanine--D-alanine ligase family. It depends on Mg(2+) as a cofactor. The cofactor is Mn(2+).

It is found in the cytoplasm. The catalysed reaction is 2 D-alanine + ATP = D-alanyl-D-alanine + ADP + phosphate + H(+). Its pathway is cell wall biogenesis; peptidoglycan biosynthesis. Its function is as follows. Cell wall formation. The protein is D-alanine--D-alanine ligase B of Bradyrhizobium diazoefficiens (strain JCM 10833 / BCRC 13528 / IAM 13628 / NBRC 14792 / USDA 110).